A 150-amino-acid chain; its full sequence is UPF0735 ACT domain-containing protein Csac_0995 (150 aa).

The ACT domain maps to 72 to 147 (TLALVLQDVP…GVKKIEILGR (76 aa)).

This sequence belongs to the UPF0735 family.

This Caldicellulosiruptor saccharolyticus (strain ATCC 43494 / DSM 8903 / Tp8T 6331) protein is UPF0735 ACT domain-containing protein Csac_0995.